The chain runs to 381 residues: Neutral protease 2 homolog mep20 (381 aa).

The N-terminal stretch at Met-1–Ala-19 is a signal peptide. Residues Leu-20 to Arg-193 constitute a propeptide that is removed on maturation. Intrachain disulfides connect Cys-199/Cys-271 and Cys-278/Cys-296. His-321 provides a ligand contact to Zn(2+). Glu-322 is a catalytic residue. Zn(2+)-binding residues include His-325 and Asp-336.

This sequence belongs to the peptidase M35 family. Zn(2+) serves as cofactor.

It carries out the reaction Preferential cleavage of bonds with hydrophobic residues in P1'. Also 3-Asn-|-Gln-4 and 8-Gly-|-Ser-9 bonds in insulin B chain.. Functionally, secreted metalloproteinase that allows assimilation of proteinaceous substrates. Shows high activities on basic nuclear substrates such as histone and protamine. The polypeptide is Neutral protease 2 homolog mep20 (mep20) (Aspergillus flavus).